Consider the following 152-residue polypeptide: Large ribosomal subunit protein uL15 (152 aa).

The disordered stretch occupies residues 1 to 79 (MRLNELSPPP…GRHTPAHPKV (79 aa)). Residues 22–35 (GEGSGYGKTSGRGQ) show a composition bias toward gly residues.

This sequence belongs to the universal ribosomal protein uL15 family. Part of the 50S ribosomal subunit.

In terms of biological role, binds to the 23S rRNA. In Rubrobacter xylanophilus (strain DSM 9941 / JCM 11954 / NBRC 16129 / PRD-1), this protein is Large ribosomal subunit protein uL15.